Consider the following 843-residue polypeptide: Respiratory burst oxidase homolog protein B (843 aa).

Residues 1 to 10 are compositionally biased toward acidic residues; the sequence is MREEEMESSS. Residues 1-27 form a disordered region; sequence MREEEMESSSEGETNKISRCKATGSDN. The Cytoplasmic segment spans residues 1-297; sequence MREEEMESSS…SYFFLENWKR (297 aa). EF-hand-like stretches follow at residues 114-122 and 148-159; these read AVEGKLPKS and RGTTSSSITKTE. EF-hand domains follow at residues 171–206 and 215–250; these read SFDDRLQIFFDMVDKNLDGRITGDEVKEIIALSASA and NVDEYAALIMEELDRDNLGYIELHNLETLLLQVPSQ. Residues aspartate 184, asparagine 186, aspartate 188, arginine 190, and glutamate 195 each contribute to the Ca(2+) site. Residue serine 268 is modified to Phosphoserine. Residues 298–318 form a helical membrane-spanning segment; sequence IWVLTLWISICITLFTWKFLQ. Topologically, residues 319–383 are extracellular; that stretch reads YKRKTVFEVM…FDDNINFHKV (65 aa). The Ferric oxidoreductase domain maps to 336–495; it reads KGSAETLKFN…LFVIVYVLLI (160 aa). A helical transmembrane segment spans residues 384–404; sequence VAFGIAVGIGLHAISHLACDF. The Cytoplasmic portion of the chain corresponds to 405–439; the sequence is PRLLHAKNVEFEPMKKFFGDERPENYGWFMKGTDG. A helical membrane pass occupies residues 440 to 460; it reads WTGVTMVVLMLVAYVLAQSWF. Topologically, residues 461–482 are extracellular; it reads RRNRANLPKSLKRLTGFNAFWY. A helical membrane pass occupies residues 483-503; sequence SHHLFVIVYVLLIVHGYFVYL. Topologically, residues 504–511 are cytoplasmic; it reads SKEWYHKT. Residues 512 to 529 traverse the membrane as a helical segment; the sequence is TWMYLAVPVLLYAFERLI. Residues 530–659 lie on the Extracellular side of the membrane; sequence RAFRPGAKAV…PYGAPAQDYR (130 aa). Positions 534 to 657 constitute an FAD-binding FR-type domain; it reads PGAKAVKVLK…DGPYGAPAQD (124 aa). Residues 660–680 traverse the membrane as a helical segment; sequence NYDVLLLVGLGIGATPLISII. The Cytoplasmic segment spans residues 681-843; it reads RDVLNNIKNQ…TKFEFHKENF (163 aa).

It belongs to the RBOH (TC 5.B.1.3) family. As to quaternary structure, monomer and homodimer.

The protein resides in the membrane. Calcium-dependent NADPH oxidase that generates superoxide. The polypeptide is Respiratory burst oxidase homolog protein B (RBOHB) (Arabidopsis thaliana (Mouse-ear cress)).